The chain runs to 187 residues: Ribosome-recycling factor (187 aa).

The protein belongs to the RRF family.

It localises to the cytoplasm. In terms of biological role, responsible for the release of ribosomes from messenger RNA at the termination of protein biosynthesis. May increase the efficiency of translation by recycling ribosomes from one round of translation to another. This chain is Ribosome-recycling factor, found in Bradyrhizobium sp. (strain BTAi1 / ATCC BAA-1182).